A 286-amino-acid polypeptide reads, in one-letter code: Ribosomal RNA small subunit methyltransferase I (286 aa).

This sequence belongs to the methyltransferase superfamily. RsmI family.

Its subcellular location is the cytoplasm. The enzyme catalyses cytidine(1402) in 16S rRNA + S-adenosyl-L-methionine = 2'-O-methylcytidine(1402) in 16S rRNA + S-adenosyl-L-homocysteine + H(+). Catalyzes the 2'-O-methylation of the ribose of cytidine 1402 (C1402) in 16S rRNA. The chain is Ribosomal RNA small subunit methyltransferase I from Escherichia coli O157:H7.